Reading from the N-terminus, the 127-residue chain is Fumarate reductase subunit C (127 aa).

3 consecutive transmembrane segments (helical) span residues Ala-30 to Val-50, Ile-67 to Phe-87, and Ile-107 to Val-127.

The protein belongs to the FrdC family. As to quaternary structure, part of an enzyme complex containing four subunits: a flavoprotein (FrdA), an iron-sulfur protein (FrdB), and two hydrophobic anchor proteins (FrdC and FrdD).

Its subcellular location is the cell inner membrane. Its function is as follows. Anchors the catalytic components of the fumarate reductase complex to the cell membrane, binds quinones. In Photobacterium profundum (strain SS9), this protein is Fumarate reductase subunit C.